A 167-amino-acid polypeptide reads, in one-letter code: NAD(P)H-quinone oxidoreductase subunit J (167 aa).

The protein belongs to the complex I 30 kDa subunit family. As to quaternary structure, NDH-1 can be composed of about 15 different subunits; different subcomplexes with different compositions have been identified which probably have different functions.

Its subcellular location is the cellular thylakoid membrane. The enzyme catalyses a plastoquinone + NADH + (n+1) H(+)(in) = a plastoquinol + NAD(+) + n H(+)(out). The catalysed reaction is a plastoquinone + NADPH + (n+1) H(+)(in) = a plastoquinol + NADP(+) + n H(+)(out). NDH-1 shuttles electrons from an unknown electron donor, via FMN and iron-sulfur (Fe-S) centers, to quinones in the respiratory and/or the photosynthetic chain. The immediate electron acceptor for the enzyme in this species is believed to be plastoquinone. Couples the redox reaction to proton translocation, and thus conserves the redox energy in a proton gradient. Cyanobacterial NDH-1 also plays a role in inorganic carbon-concentration. This Microcystis aeruginosa (strain NIES-843 / IAM M-2473) protein is NAD(P)H-quinone oxidoreductase subunit J.